A 153-amino-acid polypeptide reads, in one-letter code: Ribosome maturation factor RimP (153 aa).

This sequence belongs to the RimP family.

It localises to the cytoplasm. Its function is as follows. Required for maturation of 30S ribosomal subunits. This chain is Ribosome maturation factor RimP, found in Clostridium botulinum (strain Langeland / NCTC 10281 / Type F).